Reading from the N-terminus, the 675-residue chain is uncharacterized protein (675 aa).

The next 4 helical transmembrane spans lie at Q2–F22, L397–A417, L448–Y468, and I481–A501. 2 disordered regions span residues Y616–D635 and Q646–D675. Positions V665–D675 are enriched in acidic residues. At S669 the chain carries Phosphoserine.

This sequence belongs to the 1-acyl-sn-glycerol-3-phosphate acyltransferase family.

The protein localises to the endoplasmic reticulum membrane. This is an uncharacterized protein from Schizosaccharomyces pombe (strain 972 / ATCC 24843) (Fission yeast).